The primary structure comprises 372 residues: 4-hydroxy-3-methylbut-2-en-1-yl diphosphate synthase (flavodoxin) (372 aa).

[4Fe-4S] cluster-binding residues include Cys270, Cys273, Cys305, and Glu312.

It belongs to the IspG family. [4Fe-4S] cluster is required as a cofactor.

It catalyses the reaction (2E)-4-hydroxy-3-methylbut-2-enyl diphosphate + oxidized [flavodoxin] + H2O + 2 H(+) = 2-C-methyl-D-erythritol 2,4-cyclic diphosphate + reduced [flavodoxin]. It participates in isoprenoid biosynthesis; isopentenyl diphosphate biosynthesis via DXP pathway; isopentenyl diphosphate from 1-deoxy-D-xylulose 5-phosphate: step 5/6. Its function is as follows. Converts 2C-methyl-D-erythritol 2,4-cyclodiphosphate (ME-2,4cPP) into 1-hydroxy-2-methyl-2-(E)-butenyl 4-diphosphate. This is 4-hydroxy-3-methylbut-2-en-1-yl diphosphate synthase (flavodoxin) from Escherichia coli O139:H28 (strain E24377A / ETEC).